The sequence spans 308 residues: High-affinity branched-chain amino acid transport system permease protein LivH (308 aa).

The Cytoplasmic segment spans residues 1–21; the sequence is MSEQFLYFLQQMFNGVTLGST. The helical transmembrane segment at 22–42 threads the bilayer; the sequence is YALIAIGYTMVYGIIGMINFA. Over 43 to 45 the chain is Periplasmic; it reads HGE. A helical membrane pass occupies residues 46–66; that stretch reads VYMIGSYVSFMIIAALMMMGI. Topologically, residues 67 to 68 are cytoplasmic; it reads DT. A helical transmembrane segment spans residues 69 to 89; that stretch reads GWLLVAAGFVGAIVIASAYGW. The Periplasmic portion of the chain corresponds to 90 to 104; that stretch reads SIERVAYRPVRNSKR. Residues 105-125 form a helical membrane-spanning segment; that stretch reads LIALISAIGMSIFLQNYVSLT. At 126-154 the chain is on the cytoplasmic side; the sequence is EGSRDVALPSLFNGQWVVGHSENFSASIT. Residues 155-175 form a helical membrane-spanning segment; it reads TMQAVIWIVTFLAMLALTIFI. Residues 176 to 203 lie on the Periplasmic side of the membrane; the sequence is RYSRMGRACRACAEDLKMASLLGINTDR. Residues 204–224 form a helical membrane-spanning segment; the sequence is VIALTFVIGAAMAAVAGVLLG. Residues 225 to 245 are Cytoplasmic-facing; it reads QFYGVINPYIGFMAGMKAFTA. Residues 246-266 form a helical membrane-spanning segment; the sequence is AVLGGIGSIPGAMIGGLILGI. Topologically, residues 267–280 are periplasmic; sequence AEALSSAYLSTEYK. The chain crosses the membrane as a helical span at residues 281–301; sequence DVVSFALLILVLLVMPTGILG. Residues 302–308 are Cytoplasmic-facing; sequence RPEVEKV.

It belongs to the binding-protein-dependent transport system permease family. LivHM subfamily.

It localises to the cell inner membrane. In terms of biological role, part of the binding-protein-dependent transport system for branched-chain amino acids. Probably responsible for the translocation of the substrates across the membrane. The chain is High-affinity branched-chain amino acid transport system permease protein LivH (livH) from Escherichia coli O157:H7.